Consider the following 320-residue polypeptide: Cytochrome f (320 aa).

The signal sequence occupies residues 1–35 (MQTRNTFSWIREEITRSISVSLMIYIITWASISSA). Heme is bound by residues tyrosine 36, cysteine 56, cysteine 59, and histidine 60. The helical transmembrane segment at 286–306 (VQGLLFFLGSVVLAQIFLVLK) threads the bilayer.

This sequence belongs to the cytochrome f family. As to quaternary structure, the 4 large subunits of the cytochrome b6-f complex are cytochrome b6, subunit IV (17 kDa polypeptide, petD), cytochrome f and the Rieske protein, while the 4 small subunits are PetG, PetL, PetM and PetN. The complex functions as a dimer. The cofactor is heme.

The protein resides in the plastid. It localises to the chloroplast thylakoid membrane. Its function is as follows. Component of the cytochrome b6-f complex, which mediates electron transfer between photosystem II (PSII) and photosystem I (PSI), cyclic electron flow around PSI, and state transitions. This is Cytochrome f from Nasturtium officinale (Watercress).